Here is a 2464-residue protein sequence, read N- to C-terminus: Nonribosomal peptide synthetase NPS2 (2464 aa).

The interval 275–670 (DDHHPGTSQP…GRIDTQIKLR (396 aa)) is adenylation 1. Residues 814–888 (TKAEGQLLEI…QIAKALDASS (75 aa)) form the Carrier 1 domain. Serine 848 is modified (O-(pantetheine 4'-phosphoryl)serine). The interval 924–1325 (IYPPFPLQEG…EGLALDLAQG (402 aa)) is condensation 1. The Carrier 2 domain maps to 1364–1437 (EDLLLRLRKI…RMAASAGKKI (74 aa)). Serine 1398 bears the O-(pantetheine 4'-phosphoryl)serine mark. The interval 1479 to 1887 (DVFPVTTLQA…LRVLVDDLDA (409 aa)) is condensation 2. The 77-residue stretch at 1917-1993 (SSWDEKSSTL…DLVMRAGAED (77 aa)) folds into the Carrier 3 domain. Residue serine 1954 is modified to O-(pantetheine 4'-phosphoryl)serine. Residues 2047–2340 (GGSRYQHVFG…ATQIQDDLRE (294 aa)) are condensation 3.

This sequence belongs to the NRP synthetase family.

It functions in the pathway siderophore biosynthesis. Nonribosomal peptide synthetase; part of the siderophore basidioferrin biosynthetic pathway. The biosynthesis of basidioferrin depends on the hydroxylation of ornithine to N(5)-hydroxyornithine, catalyzed by the monooxygenase SMO1. The second step, the acylation of N(5)-hydroxy-L-ornithine is catalyzed by a not yet identified N-acyltransferase. Finally, assembly of basidioferrin is catalyzed by the nonribosomal peptide synthase (NRPS) NPS2 via amide bond formation between three L-AHO molecules to release the linear L-AHO trimer. N-5-acetyl-N-5-hydroxy-L-ornithine (L-AHO) and N-5-cis-anhydromevalonyl-N-5-hydroxy-L-ornithine (L-AMHO) are accepted as the substrates by the NPS2 adenylation (A) domain, but only L-AHO is trimerized. In Ceriporiopsis subvermispora (strain B) (White-rot fungus), this protein is Nonribosomal peptide synthetase NPS2.